A 156-amino-acid chain; its full sequence is MEVRVIEGEFKGEGVKIGVVVARFNDLLTNELLSGALDCFERHSVEEVDVVKVPGSFEIPLVAKKLAESGKYDAVLALGAVVRGETKHFDLVANEVAKGVAKVSLDSGVPVIFGVITVEDELQGFNRAGVKSNKGFEYAMAALEMANLMKKLREKE.

5-amino-6-(D-ribitylamino)uracil contacts are provided by residues Phe-24, Ser-56–Glu-58, and Ala-80–Val-82. (2S)-2-hydroxy-3-oxobutyl phosphate is bound at residue Glu-85 to Thr-86. Residue His-88 is the Proton donor of the active site. 5-amino-6-(D-ribitylamino)uracil is bound at residue Phe-113. Arg-127 serves as a coordination point for (2S)-2-hydroxy-3-oxobutyl phosphate.

The protein belongs to the DMRL synthase family.

The catalysed reaction is (2S)-2-hydroxy-3-oxobutyl phosphate + 5-amino-6-(D-ribitylamino)uracil = 6,7-dimethyl-8-(1-D-ribityl)lumazine + phosphate + 2 H2O + H(+). Its pathway is cofactor biosynthesis; riboflavin biosynthesis; riboflavin from 2-hydroxy-3-oxobutyl phosphate and 5-amino-6-(D-ribitylamino)uracil: step 1/2. In terms of biological role, catalyzes the formation of 6,7-dimethyl-8-ribityllumazine by condensation of 5-amino-6-(D-ribitylamino)uracil with 3,4-dihydroxy-2-butanone 4-phosphate. This is the penultimate step in the biosynthesis of riboflavin. This Thermococcus kodakarensis (strain ATCC BAA-918 / JCM 12380 / KOD1) (Pyrococcus kodakaraensis (strain KOD1)) protein is 6,7-dimethyl-8-ribityllumazine synthase.